A 652-amino-acid chain; its full sequence is UvrABC system protein C (652 aa).

In terms of domain architecture, GIY-YIG spans 20–99 (PEPGCYLMRD…IKNHQPHFNV (80 aa)). In terms of domain architecture, UVR spans 209-244 (DELQRLLDEQMNRYAERLDFESAARVRDQLQGLDQL).

The protein belongs to the UvrC family. In terms of assembly, interacts with UvrB in an incision complex.

The protein resides in the cytoplasm. Its function is as follows. The UvrABC repair system catalyzes the recognition and processing of DNA lesions. UvrC both incises the 5' and 3' sides of the lesion. The N-terminal half is responsible for the 3' incision and the C-terminal half is responsible for the 5' incision. This is UvrABC system protein C from Parasynechococcus marenigrum (strain WH8102).